A 329-amino-acid chain; its full sequence is MKLAIDAMGGDHAPKAIVEGVKRFVAQYPNESMELFLVGDEVKIASYGLDDPRVTVVPASEIITGEDEPVRAVRRKKDSSLVVAAQLVKEGKADALVSAGNTGALMAASLFIIGRIPGIERPALSPTFPTYTGSGVVVLDVGANPDAKAEHLVDYAIMGSLYAEHVRGIKTPRVALLNIGTEAGKGNALTKEAFPLLEQAPVHFVGNVEAREAMSGDVDVIVTEGFAGNILLKGVEGSSSMLMKMMKEQFTSDLVSKLAALILKPKLRRLKETLDYREHGGAGLFGINAPVIKAHGSSDALAIMSALKQAKIMVDHDVVEKIKRAKAID.

The protein belongs to the PlsX family. Homodimer. Probably interacts with PlsY.

The protein resides in the cytoplasm. It carries out the reaction a fatty acyl-[ACP] + phosphate = an acyl phosphate + holo-[ACP]. The protein operates within lipid metabolism; phospholipid metabolism. Catalyzes the reversible formation of acyl-phosphate (acyl-PO(4)) from acyl-[acyl-carrier-protein] (acyl-ACP). This enzyme utilizes acyl-ACP as fatty acyl donor, but not acyl-CoA. The sequence is that of Phosphate acyltransferase from Exiguobacterium sp. (strain ATCC BAA-1283 / AT1b).